Consider the following 487-residue polypeptide: GTPase Der (487 aa).

In terms of domain architecture, EngA-type G 1 spans 2-166 (LKIAILGRPN…RIKLVANLPE (165 aa)). GTP-binding positions include 8–15 (GRPNVGKS), 55–59 (DTGGV), and 118–121 (NKAD). Positions 165 to 194 (PEPREEEEEGLEELSVDEHEESEAALPSNT) are disordered. Acidic residues predominate over residues 168–187 (REEEEEGLEELSVDEHEESE). In terms of domain architecture, EngA-type G 2 spans 225 to 398 (LKIALIGRPN…AIDELHHVVS (174 aa)). GTP-binding positions include 231 to 238 (GRPNVGKS), 278 to 282 (DTAGL), and 343 to 346 (NKWD). The region spanning 399–483 (NKVPTPIVNK…PFDLEFKEKP (85 aa)) is the KH-like domain.

The protein belongs to the TRAFAC class TrmE-Era-EngA-EngB-Septin-like GTPase superfamily. EngA (Der) GTPase family. As to quaternary structure, associates with the 50S ribosomal subunit.

Its function is as follows. GTPase that plays an essential role in the late steps of ribosome biogenesis. The chain is GTPase Der from Chlamydia pneumoniae (Chlamydophila pneumoniae).